The chain runs to 321 residues: Glutaminase (321 aa).

Ser69, Asn120, Glu165, Asn172, Tyr196, Tyr248, and Val266 together coordinate substrate.

It belongs to the glutaminase family. As to quaternary structure, homotetramer.

It catalyses the reaction L-glutamine + H2O = L-glutamate + NH4(+). The polypeptide is Glutaminase (Bacteroides thetaiotaomicron (strain ATCC 29148 / DSM 2079 / JCM 5827 / CCUG 10774 / NCTC 10582 / VPI-5482 / E50)).